The following is a 230-amino-acid chain: Cysteine S-methyltransferase OspZ (230 aa).

The tract at residues 49–52 (GITR) is interaction with host proteins TAB2, TAB3 and ZRANB3. S-adenosyl-L-methionine-binding residues include Ala92, Ser98, Arg107, Gln111, Tyr204, and Glu208.

It belongs to the NleE/OspZ family. Monomer.

The protein localises to the secreted. Its subcellular location is the host cytoplasm. It localises to the host nucleus. It catalyses the reaction L-cysteinyl-[protein] + S-adenosyl-L-methionine = S-methyl-L-cysteinyl-[protein] + S-adenosyl-L-homocysteine + H(+). Cysteine methyltransferase effector that inhibits host cell NF-kappa-B activation by preventing nuclear translocation of host protein RELA/p65. Acts by mediating cysteine methylation of host proteins TAB2 and TAB3: methylation of a conserved cysteine residue of the RanBP2-type zinc finger (NZF) of TAB2 and TAB3 disrupts zinc-binding, thereby inactivating the ubiquitin chain-binding activity of TAB2 and TAB3, leading to NF-kappa-B inactivation. Also mediates cysteine methylation of host protein ZRANB3, inactivating its ability to bind ubiquitin chains. This is Cysteine S-methyltransferase OspZ from Shigella boydii.